The primary structure comprises 232 residues: Histone H1-II (232 aa).

Over residues 1 to 18 (MSDPAPEVAPAAPVASPA) the composition is skewed to low complexity. Disordered stretches follow at residues 1-44 (MSDP…PPVS) and 103-232 (GKGA…AKKA). Residues 39–114 (THPPVSEMVV…GASGSFKLPA (76 aa)) enclose the H15 domain. Basic residues-rich tracts occupy residues 149–171 (SIAK…KSTK) and 179–232 (AAKK…AKKA).

It belongs to the histone H1/H5 family.

It is found in the nucleus. The protein resides in the chromosome. Histones H1 are necessary for the condensation of nucleosome chains into higher-order structures. The sequence is that of Histone H1-II from Glyptotendipes barbipes (Midge).